Here is a 132-residue protein sequence, read N- to C-terminus: uncharacterized protein (132 aa).

Transmembrane regions (helical) follow at residues 7-29 (LALL…PTLF), 44-62 (VFPV…SLFL), 69-88 (LFLS…EFIV), and 108-130 (GVSM…ILIF).

It is found in the cell membrane. This is an uncharacterized protein from Aquifex aeolicus (strain VF5).